The primary structure comprises 427 residues: Glucose-1-phosphate adenylyltransferase (427 aa).

Residues tyrosine 121, glycine 186, 201 to 202 (EK), and serine 219 contribute to the alpha-D-glucose 1-phosphate site.

It belongs to the bacterial/plant glucose-1-phosphate adenylyltransferase family. In terms of assembly, homotetramer.

The catalysed reaction is alpha-D-glucose 1-phosphate + ATP + H(+) = ADP-alpha-D-glucose + diphosphate. It functions in the pathway glycan biosynthesis; glycogen biosynthesis. Functionally, involved in the biosynthesis of ADP-glucose, a building block required for the elongation reactions to produce glycogen. Catalyzes the reaction between ATP and alpha-D-glucose 1-phosphate (G1P) to produce pyrophosphate and ADP-Glc. The sequence is that of Glucose-1-phosphate adenylyltransferase from Corynebacterium diphtheriae (strain ATCC 700971 / NCTC 13129 / Biotype gravis).